The following is a 464-amino-acid chain: Phosphoglucosamine mutase (464 aa).

S112 functions as the Phosphoserine intermediate in the catalytic mechanism. Residues S112, D252, D254, and D256 each coordinate Mg(2+). Phosphoserine is present on S112.

The protein belongs to the phosphohexose mutase family. Mg(2+) serves as cofactor. In terms of processing, activated by phosphorylation.

The enzyme catalyses alpha-D-glucosamine 1-phosphate = D-glucosamine 6-phosphate. Functionally, catalyzes the conversion of glucosamine-6-phosphate to glucosamine-1-phosphate. This is Phosphoglucosamine mutase from Synechococcus sp. (strain CC9605).